The sequence spans 433 residues: ATP-dependent protease ATPase subunit HslU (433 aa).

ATP is bound by residues Ile-18, Gly-60 to Glu-65, Asp-246, Glu-311, and Arg-383.

It belongs to the ClpX chaperone family. HslU subfamily. In terms of assembly, a double ring-shaped homohexamer of HslV is capped on each side by a ring-shaped HslU homohexamer. The assembly of the HslU/HslV complex is dependent on binding of ATP.

It is found in the cytoplasm. Functionally, ATPase subunit of a proteasome-like degradation complex; this subunit has chaperone activity. The binding of ATP and its subsequent hydrolysis by HslU are essential for unfolding of protein substrates subsequently hydrolyzed by HslV. HslU recognizes the N-terminal part of its protein substrates and unfolds these before they are guided to HslV for hydrolysis. The protein is ATP-dependent protease ATPase subunit HslU of Cereibacter sphaeroides (strain ATCC 17029 / ATH 2.4.9) (Rhodobacter sphaeroides).